We begin with the raw amino-acid sequence, 671 residues long: UBA domain-containing protein RUP1 (671 aa).

The region spanning 1–41 (MMDNQAVKSLLEMGIPHEVAVDALQRTGGNLEAAVNFIFSN) is the UBA domain. Phosphoserine is present on serine 56. The disordered stretch occupies residues 68–87 (GTKPCDVPNNGDQDIDMPDV). A coiled-coil region spans residues 432 to 501 (SKRKQARTRS…LNSARAAKME (70 aa)). The disordered stretch occupies residues 643 to 671 (DGMGDPEQATNNINNGNDNDNDDDIDSDN). Acidic residues predominate over residues 661–671 (NDNDDDIDSDN).

Forms a ternary complex with RSP5 and UBP2.

It localises to the cytoplasm. Its subcellular location is the nucleus. Functionally, modulates the activity of the RSP5 HECT ubiquitin-protein ligase through its mediation of the interaction between RSP5 and the deubiquitinase UBP2. Involved in regulation of cell wall homeostasis. The chain is UBA domain-containing protein RUP1 (RUP1) from Saccharomyces cerevisiae (strain ATCC 204508 / S288c) (Baker's yeast).